The primary structure comprises 336 residues: Ferrochelatase (336 aa).

Fe cation is bound by residues H206 and E287.

This sequence belongs to the ferrochelatase family.

The protein resides in the cytoplasm. It catalyses the reaction heme b + 2 H(+) = protoporphyrin IX + Fe(2+). It participates in porphyrin-containing compound metabolism; protoheme biosynthesis; protoheme from protoporphyrin-IX: step 1/1. In terms of biological role, catalyzes the ferrous insertion into protoporphyrin IX. This is Ferrochelatase from Neisseria gonorrhoeae (strain ATCC 700825 / FA 1090).